The sequence spans 20 residues: Pregnancy-associated glycoprotein 71D (20 aa).

An N-linked (GlcNAc...) asparagine glycan is attached at Asn-4.

This sequence belongs to the peptidase A1 family. In terms of tissue distribution, chorionic epithelium (trophectoderm) and placental cotyledons.

Its subcellular location is the secreted. It localises to the extracellular space. This is Pregnancy-associated glycoprotein 71D from Bison bonasus (European bison).